Reading from the N-terminus, the 136-residue chain is Early E3 15.3 kDa protein (136 aa).

It belongs to the adenoviridae E3_15 family.

Functionally, protects virus-infected cells from TNF-induced cytolysis. The protein is Early E3 15.3 kDa protein of Human adenovirus B serotype 3 (HAdV-3).